A 477-amino-acid polypeptide reads, in one-letter code: Glutamyl-tRNA(Gln) amidotransferase subunit A (477 aa).

Active-site charge relay system residues include K71 and S146. The active-site Acyl-ester intermediate is the S170.

It belongs to the amidase family. GatA subfamily. In terms of assembly, heterotrimer of A, B and C subunits.

The catalysed reaction is L-glutamyl-tRNA(Gln) + L-glutamine + ATP + H2O = L-glutaminyl-tRNA(Gln) + L-glutamate + ADP + phosphate + H(+). Its function is as follows. Allows the formation of correctly charged Gln-tRNA(Gln) through the transamidation of misacylated Glu-tRNA(Gln) in organisms which lack glutaminyl-tRNA synthetase. The reaction takes place in the presence of glutamine and ATP through an activated gamma-phospho-Glu-tRNA(Gln). The chain is Glutamyl-tRNA(Gln) amidotransferase subunit A from Halothermothrix orenii (strain H 168 / OCM 544 / DSM 9562).